The primary structure comprises 385 residues: Centrosomal protein of 44 kDa (385 aa).

The interval 11–192 (RNLEQVLRSL…GANIPEDTVT (182 aa)) is binds with microtubules and centrioles. Residues 126-154 (LEKTPSQQRKKTSSAKSEPCSSTEKTSTE) form a disordered region. Over residues 139-154 (SAKSEPCSSTEKTSTE) the composition is skewed to polar residues. Residues 230 to 271 (EVTALQSMLAECQEKLKKLTCIESRLESLEEKMKGKVLVNEK) adopt a coiled-coil conformation. The segment at 303-348 (SEDYSSSSDMDSLNPDRKSKEERHANIPLSSGYSTVSSDSTPRTST) is disordered. The span at 305 to 314 (DYSSSSDMDS) shows a compositional bias: low complexity. Positions 316–327 (NPDRKSKEERHA) are enriched in basic and acidic residues. The segment covering 332–342 (SSGYSTVSSDS) has biased composition (low complexity). Position 342 is a phosphoserine (S342). The residue at position 343 (T343) is a Phosphothreonine. The stretch at 358-381 (SEETTMQKMERMKKMFEETAELLK) forms a coiled coil.

Interacts with CROCC. Interacts with POC1B; the interaction is direct and recruits POC1B to centriolar microtubules. Binds to centriolar microtubules.

It is found in the cytoplasm. The protein localises to the cytoskeleton. Its subcellular location is the microtubule organizing center. It localises to the centrosome. The protein resides in the centriole. It is found in the spindle pole. The protein localises to the midbody. Centriole-enriched microtubule-binding protein involved in centriole biogenesis. In collaboration with CEP295 and POC1B, is required for the centriole-to-centrosome conversion by ensuring the formation of bona fide centriole wall. Functions as a linker component that maintains centrosome cohesion. Associates with CROCC and regulates its stability and localization to the centrosome. The chain is Centrosomal protein of 44 kDa (CEP44) from Bos taurus (Bovine).